The following is a 343-amino-acid chain: Protein RecA (343 aa).

Residue 66-73 (GPESSGKT) participates in ATP binding.

The protein belongs to the RecA family.

The protein localises to the cytoplasm. Functionally, can catalyze the hydrolysis of ATP in the presence of single-stranded DNA, the ATP-dependent uptake of single-stranded DNA by duplex DNA, and the ATP-dependent hybridization of homologous single-stranded DNAs. It interacts with LexA causing its activation and leading to its autocatalytic cleavage. The polypeptide is Protein RecA (Rickettsia bellii (strain OSU 85-389)).